Reading from the N-terminus, the 228-residue chain is Eukaryotic translation initiation factor 4E-1 (228 aa).

2 EIF4G-binding regions span residues 53–56 (HLLE) and 63–99 (FDTP…NNIH). Residues 71–76 (KQDDWG), Lys103, and 121–122 (WE) each bind mRNA. Cysteines 126 and 164 form a disulfide. The EIF4G-binding stretch occupies residues 147 to 156 (YTLLAMIGEQ). Residues 171 to 176 (RGRAEK) and 216 to 220 (RKLDR) each bind mRNA.

Belongs to the eukaryotic initiation factor 4E family. EIF4F is a multi-subunit complex, the composition of which varies with external and internal environmental conditions. It is composed of at least EIF4A, EIF4E and EIF4G. EIF4E is also known to interact with other partners. In higher plants two isoforms of EIF4F have been identified, named isoform EIF4F and isoform EIF(iso)4F. Isoform EIF4F has subunits p220 and p26, whereas isoform EIF(iso)4F has subunits p82 and p28. In terms of assembly, (Microbial infection) Interacts with potyvirus viral genome-linked protein (VPg); this interaction is possible in susceptible hosts but impaired in resistant plants. According to the redox status, the Cys-126-Cys-164 disulfide bridge may have a role in regulating protein function by affecting its ability to bind capped mRNA.

The protein localises to the nucleus. It localises to the cytoplasm. Component of the protein complex eIF4F, which is involved in the recognition of the mRNA cap, ATP-dependent unwinding of 5'-terminal secondary structure and recruitment of mRNA to the ribosome. Recognizes and binds the 7-methylguanosine-containing mRNA cap during an early step in the initiation of protein synthesis and facilitates ribosome binding by inducing the unwinding of the mRNAs secondary structures. Key component of recessive resistance to potyviruses. Its function is as follows. (Microbial infection) Susceptibility host factor required for viral infection by recruiting viral RNAs to the host ribosomal complex via an interaction with viral genome-linked protein (VPg). Also seems to be involved in virus movement from cell-to-cell. The protein is Eukaryotic translation initiation factor 4E-1 of Pisum sativum (Garden pea).